The sequence spans 75 residues: Putative sulfur carrier protein TsuB (75 aa).

Cys-13 (cysteine persulfide intermediate) is an active-site residue.

It belongs to the sulfur carrier protein TusA family.

In terms of biological role, involved in thiosulfate metabolism. The polypeptide is Putative sulfur carrier protein TsuB (Escherichia coli (strain K12)).